A 227-amino-acid chain; its full sequence is Cytochrome c oxidase subunit 2 (227 aa).

At Met-1–Ser-14 the chain is on the mitochondrial intermembrane side. Residues Pro-15–Met-45 form a helical membrane-spanning segment. Over Leu-46–Gln-59 the chain is Mitochondrial matrix. Residues Glu-60 to Met-87 form a helical membrane-spanning segment. Residues Asp-88–Leu-227 are Mitochondrial intermembrane-facing. Cu cation contacts are provided by His-161, Cys-196, Glu-198, Cys-200, His-204, and Met-207. Mg(2+) is bound at residue Glu-198.

Belongs to the cytochrome c oxidase subunit 2 family. As to quaternary structure, component of the cytochrome c oxidase (complex IV, CIV), a multisubunit enzyme composed of 14 subunits. The complex is composed of a catalytic core of 3 subunits MT-CO1, MT-CO2 and MT-CO3, encoded in the mitochondrial DNA, and 11 supernumerary subunits COX4I, COX5A, COX5B, COX6A, COX6B, COX6C, COX7A, COX7B, COX7C, COX8 and NDUFA4, which are encoded in the nuclear genome. The complex exists as a monomer or a dimer and forms supercomplexes (SCs) in the inner mitochondrial membrane with NADH-ubiquinone oxidoreductase (complex I, CI) and ubiquinol-cytochrome c oxidoreductase (cytochrome b-c1 complex, complex III, CIII), resulting in different assemblies (supercomplex SCI(1)III(2)IV(1) and megacomplex MCI(2)III(2)IV(2)). Found in a complex with TMEM177, COA6, COX18, COX20, SCO1 and SCO2. Interacts with TMEM177 in a COX20-dependent manner. Interacts with COX20. Interacts with COX16. Requires Cu cation as cofactor.

It localises to the mitochondrion inner membrane. The catalysed reaction is 4 Fe(II)-[cytochrome c] + O2 + 8 H(+)(in) = 4 Fe(III)-[cytochrome c] + 2 H2O + 4 H(+)(out). Functionally, component of the cytochrome c oxidase, the last enzyme in the mitochondrial electron transport chain which drives oxidative phosphorylation. The respiratory chain contains 3 multisubunit complexes succinate dehydrogenase (complex II, CII), ubiquinol-cytochrome c oxidoreductase (cytochrome b-c1 complex, complex III, CIII) and cytochrome c oxidase (complex IV, CIV), that cooperate to transfer electrons derived from NADH and succinate to molecular oxygen, creating an electrochemical gradient over the inner membrane that drives transmembrane transport and the ATP synthase. Cytochrome c oxidase is the component of the respiratory chain that catalyzes the reduction of oxygen to water. Electrons originating from reduced cytochrome c in the intermembrane space (IMS) are transferred via the dinuclear copper A center (CU(A)) of subunit 2 and heme A of subunit 1 to the active site in subunit 1, a binuclear center (BNC) formed by heme A3 and copper B (CU(B)). The BNC reduces molecular oxygen to 2 water molecules using 4 electrons from cytochrome c in the IMS and 4 protons from the mitochondrial matrix. This chain is Cytochrome c oxidase subunit 2 (MT-CO2), found in Lemur catta (Ring-tailed lemur).